The following is a 456-amino-acid chain: Histidine--tRNA ligase (456 aa).

The protein belongs to the class-II aminoacyl-tRNA synthetase family. Homodimer.

It localises to the cytoplasm. The catalysed reaction is tRNA(His) + L-histidine + ATP = L-histidyl-tRNA(His) + AMP + diphosphate + H(+). The protein is Histidine--tRNA ligase of Borrelia garinii subsp. bavariensis (strain ATCC BAA-2496 / DSM 23469 / PBi) (Borreliella bavariensis).